The chain runs to 263 residues: MPEGPEIRRAADNLEAAIKGKPLTDVWFAFPQLKTYQSQLIGQHVTHVETRGKALLTHFSNDLTLYSHNQLYGVWRVVDTSEEPQTTRVLRVKLQTADKTILLYSASDIEMLRPEQLTTHPFLQRVGPDVLDPNLTPEVVKERLLSPRFRNRQFAGLLLDQAFLAGLGNYLRVEILWQVGLTGNHKAKDLNAAQLDALAHALLEIPRFSYATRGQVDENKHHGALFRFKVFHRDGELCERCGGIIEKTTLSSRPFYWCPGCQH.

Residue Pro2 is the Schiff-base intermediate with DNA of the active site. The active-site Proton donor is the Glu3. Residue Lys53 is the Proton donor; for beta-elimination activity of the active site. Residues Gln70, Arg125, and Asn169 each coordinate DNA. The segment at 229–263 adopts an FPG-type zinc-finger fold; the sequence is KVFHRDGELCERCGGIIEKTTLSSRPFYWCPGCQH. Arg253 acts as the Proton donor; for delta-elimination activity in catalysis.

The protein belongs to the FPG family. The cofactor is Zn(2+).

The enzyme catalyses 2'-deoxyribonucleotide-(2'-deoxyribose 5'-phosphate)-2'-deoxyribonucleotide-DNA = a 3'-end 2'-deoxyribonucleotide-(2,3-dehydro-2,3-deoxyribose 5'-phosphate)-DNA + a 5'-end 5'-phospho-2'-deoxyribonucleoside-DNA + H(+). In terms of biological role, involved in base excision repair of DNA damaged by oxidation or by mutagenic agents. Acts as a DNA glycosylase that recognizes and removes damaged bases. Has a preference for oxidized pyrimidines, such as thymine glycol, 5,6-dihydrouracil and 5,6-dihydrothymine. Has AP (apurinic/apyrimidinic) lyase activity and introduces nicks in the DNA strand. Cleaves the DNA backbone by beta-delta elimination to generate a single-strand break at the site of the removed base with both 3'- and 5'-phosphates. The sequence is that of Endonuclease 8 from Escherichia coli (strain 55989 / EAEC).